The primary structure comprises 890 residues: MSASSSRLLFDCGSLDWPNKSLFGDPTTRDVMNEHISSTWNAVIRRHMLAPNANAETILGRDGLPSAQFDAYGAMLPSFIQALNAPTTRLRISAPLSTAESILCADASHAPWLYMANSVCAYEATHLQPVQTFIAFNFAHGYCYLSLFIPLSFRITFENARGFSRFLEQLPDILGAYPTLAAIYKTMLFAIRLFPEVLQAPIPIIAKRPGVLQFHVSDARGLPPSWFPMKCGSVASFVALITNNLNSDLLNGIVGSNGDGEHYTNWNSGHDHWIVNRFITVKDLHSSLKSALEVDLDTEGGRNAVLDLLLDLGVTNLVRREKRFPAYFQGAESVYLLLSCERVGNELVAVQDALQEPLANYSGLDLRALIINLGGLPSRHSDICYTRNIFENDNHLVWNFEFYRIASITKNAQIDRDVLSSSMANLFSDFVSESSNGQYRVKEPRPVVQYRVEHDEPVASSAPSAWWQVLIGITTAILGAIIFFLWRCFLRAKRVKFQAKDSFPWFTTSGDDDSPPPPGDSPSRPPGRSPDRVLPRTVVRDLSFNDDDDLHSVDLNEAGSRFGEVVSLIARGNLRELAGAIPESLSNLTLLQTSASGSGFYTMVALYLATLGDAITAFHEHNDASPATIQSLRTLELQLEARGLRFNEAGTPANLIQRGVNSSVGRALVRLTQSALLATGENFRTRMATTLERIAAERLNTLTAYDQRVIEMTTELLAAIKPVLEVERSELTPHLANAEALLQVYNNLFSTDYVSASLLALRREMILRSAEGRVGEQPTSASDAANEELVQRSMTKLDKEIELFQAQIDSQRRAVTITEASNLRENILQPINTVANIAMAGAFLRGGARHRMPGMPDVATPMPNPFRAFSGRGHSLTTTRSGGLFRRPRV.

A Peptidase C6 domain is found at 135 to 255 (AFNFAHGYCY…NSDLLNGIVG (121 aa)). Catalysis depends on for helper component proteinase activity residues cysteine 143 and histidine 215. The segment at 506 to 533 (FTTSGDDDSPPPPGDSPSRPPGRSPDRV) is disordered. Positions 515–528 (PPPPGDSPSRPPGR) are enriched in pro residues. A coiled-coil region spans residues 788-816 (ELVQRSMTKLDKEIELFQAQIDSQRRAVT).

The protein belongs to the bymoviruses polyprotein 2 family. Post-translationally, the viral RNA2 of bymoviruses is expressed as a single polyprotein which undergoes post-translational proteolytic processing resulting in the production of at least two individual proteins. The HC-pro cleaves its C-terminus autocatalytically (Potential).

The enzyme catalyses Hydrolyzes a Gly-|-Gly bond at its own C-terminus, commonly in the sequence -Tyr-Xaa-Val-Gly-|-Gly, in the processing of the potyviral polyprotein.. The chain is Genome polyprotein 2 from Hordeum vulgare (Barley).